A 294-amino-acid chain; its full sequence is N-acetylmuramic acid 6-phosphate etherase (294 aa).

The 164-residue stretch at Val-54–Lys-217 folds into the SIS domain. Glu-82 functions as the Proton donor in the catalytic mechanism. Glu-113 is an active-site residue.

This sequence belongs to the GCKR-like family. MurNAc-6-P etherase subfamily. In terms of assembly, homodimer.

It catalyses the reaction N-acetyl-D-muramate 6-phosphate + H2O = N-acetyl-D-glucosamine 6-phosphate + (R)-lactate. The protein operates within amino-sugar metabolism; N-acetylmuramate degradation. Its function is as follows. Specifically catalyzes the cleavage of the D-lactyl ether substituent of MurNAc 6-phosphate, producing GlcNAc 6-phosphate and D-lactate. This is N-acetylmuramic acid 6-phosphate etherase from Bacillus cytotoxicus (strain DSM 22905 / CIP 110041 / 391-98 / NVH 391-98).